The sequence spans 217 residues: Nitrile hydratase subunit beta (217 aa).

This sequence belongs to the nitrile hydratase subunit beta family. Heterodimer of an alpha and a beta chain.

It catalyses the reaction an aliphatic primary amide = an aliphatic nitrile + H2O. In terms of biological role, NHase catalyzes the hydration of various nitrile compounds to the corresponding amides. This Pseudomonas putida (Arthrobacter siderocapsulatus) protein is Nitrile hydratase subunit beta (nthB).